Reading from the N-terminus, the 202-residue chain is N-(5'-phosphoribosyl)anthranilate isomerase (202 aa).

It belongs to the TrpF family.

It carries out the reaction N-(5-phospho-beta-D-ribosyl)anthranilate = 1-(2-carboxyphenylamino)-1-deoxy-D-ribulose 5-phosphate. It functions in the pathway amino-acid biosynthesis; L-tryptophan biosynthesis; L-tryptophan from chorismate: step 3/5. This chain is N-(5'-phosphoribosyl)anthranilate isomerase, found in Listeria monocytogenes serotype 4b (strain CLIP80459).